The sequence spans 268 residues: Trypsin-like protease (268 aa).

The N-terminal stretch at 1 to 41 (MTHTTTIAAKRGGLALAKKAAAAGAVALAVASLQPVSAAHA) is a signal peptide. The propeptide at 42 to 45 (ADAR) is activation peptide. In terms of domain architecture, Peptidase S1 spans 46–266 (VIGGKPAAQN…FAKDIAKAAS (221 aa)). The cysteines at positions 67 and 83 are disulfide-linked. Residues His-82 and Asp-127 each act as charge relay system in the active site. 2 disulfide bridges follow: Cys-187–Cys-202 and Cys-213–Cys-242. Residue Ser-217 is the Charge relay system of the active site.

It belongs to the peptidase S1 family.

Its function is as follows. Protease that shows preferential cleavage after Arg and Lys residues. This Streptomyces glaucescens protein is Trypsin-like protease.